The primary structure comprises 342 residues: tRNA N6-adenosine threonylcarbamoyltransferase (342 aa).

2 residues coordinate Fe cation: His-111 and His-115. Residues 134 to 138, Asp-167, Gly-180, and Asn-275 each bind substrate; that span reads LVSGG. Position 303 (Asp-303) interacts with Fe cation.

The protein belongs to the KAE1 / TsaD family. The cofactor is Fe(2+).

It is found in the cytoplasm. It catalyses the reaction L-threonylcarbamoyladenylate + adenosine(37) in tRNA = N(6)-L-threonylcarbamoyladenosine(37) in tRNA + AMP + H(+). Its function is as follows. Required for the formation of a threonylcarbamoyl group on adenosine at position 37 (t(6)A37) in tRNAs that read codons beginning with adenine. Is involved in the transfer of the threonylcarbamoyl moiety of threonylcarbamoyl-AMP (TC-AMP) to the N6 group of A37, together with TsaE and TsaB. TsaD likely plays a direct catalytic role in this reaction. The chain is tRNA N6-adenosine threonylcarbamoyltransferase from Paraburkholderia xenovorans (strain LB400).